The following is a 525-amino-acid chain: MSDIHEHKILILDFGSQYTQLIARRIREIGVYCELWAWDVTEAQIREFAPNGIILAGGPESVTAENSPRAPEYVFTAGVPVLGICYGMQTMSEQLGGKVIQGVGEGEFGYAQIEMLTDSLLFKGIEDAVNSEGKPLLDVWMSHGDKVSAIPEGFVAVAKTDTCPFAAMANEEKQFFGVQFHPEVTHTRQGMRMLSHFALDICGCAANWKPSSIIEDAIERLKKQIGDDEVILGLSGGVDSSVVAMLLHRAIGKKLTCVFVDNGLLRLNEAEQVMEMFGDHFGLNIIHVDAENRFLDAMKGEADPEAKRKIIGRVFVEIFDEESKKCANAKWLAQGTIYPDVIESAGSATGKAHVIKSHHNVGGLPDHMELGLVEPLRELFKDEVRKIGLELGLPYNMLYRHPFPGPGLGVRVLGEVKKEYCDLLRRADAIFIEELHKADLYNKVSQAFTVFLPVRSVGVMGDGRKYDWVVSLRAVETVDFMTAHWAHLPYDFLGRVSNRIINEVDGISRVVYDISGKPPATIEWE.

Positions 8–207 (KILILDFGSQ…ALDICGCAAN (200 aa)) constitute a Glutamine amidotransferase type-1 domain. Cysteine 85 (nucleophile) is an active-site residue. Active-site residues include histidine 181 and glutamate 183. The GMPS ATP-PPase domain maps to 208–400 (WKPSSIIEDA…LGLPYNMLYR (193 aa)). 235-241 (SGGVDSS) serves as a coordination point for ATP.

In terms of assembly, homodimer.

The enzyme catalyses XMP + L-glutamine + ATP + H2O = GMP + L-glutamate + AMP + diphosphate + 2 H(+). It participates in purine metabolism; GMP biosynthesis; GMP from XMP (L-Gln route): step 1/1. Functionally, catalyzes the synthesis of GMP from XMP. The protein is GMP synthase [glutamine-hydrolyzing] of Shewanella baltica (strain OS223).